The chain runs to 316 residues: Ribosomal protein L11 methyltransferase (316 aa).

The S-adenosyl-L-methionine site is built by Thr-163, Gly-184, Asp-206, and Asn-249.

It belongs to the methyltransferase superfamily. PrmA family.

The protein localises to the cytoplasm. The enzyme catalyses L-lysyl-[protein] + 3 S-adenosyl-L-methionine = N(6),N(6),N(6)-trimethyl-L-lysyl-[protein] + 3 S-adenosyl-L-homocysteine + 3 H(+). In terms of biological role, methylates ribosomal protein L11. The chain is Ribosomal protein L11 methyltransferase from Pediococcus pentosaceus (strain ATCC 25745 / CCUG 21536 / LMG 10740 / 183-1w).